A 4660-amino-acid polypeptide reads, in one-letter code: Low-density lipoprotein receptor-related protein 2 (4660 aa).

The first 25 residues, 1–25 (MERGAAAAAWMLLLAIAACLAPVSG), serve as a signal peptide directing secretion. The Extracellular segment spans residues 26-4425 (QECGSGNFRC…LSRGIPPGTT (4400 aa)). LDL-receptor class A domains are found at residues 27 to 63 (ECGS…IGCP), 66 to 104 (SCGS…QNCP), 107 to 143 (TCSS…RNCY), 146 to 180 (TCDQ…ANCT), 182 to 218 (LCSQ…HNCN), 221 to 257 (TCGG…DGCE), and 264 to 307 (TCYP…RYCG). 21 cysteine pairs are disulfide-bonded: cysteine 28-cysteine 40, cysteine 35-cysteine 53, cysteine 47-cysteine 62, cysteine 67-cysteine 80, cysteine 74-cysteine 93, cysteine 87-cysteine 103, cysteine 108-cysteine 120, cysteine 115-cysteine 133, cysteine 127-cysteine 142, cysteine 147-cysteine 157, cysteine 152-cysteine 170, cysteine 164-cysteine 179, cysteine 183-cysteine 195, cysteine 190-cysteine 208, cysteine 202-cysteine 217, cysteine 222-cysteine 234, cysteine 229-cysteine 247, cysteine 241-cysteine 256, cysteine 265-cysteine 278, cysteine 272-cysteine 291, and cysteine 285-cysteine 306. Residues asparagine 159 and asparagine 178 are each glycosylated (N-linked (GlcNAc...) asparagine). N-linked (GlcNAc...) asparagine glycans are attached at residues asparagine 299, asparagine 340, asparagine 387, and asparagine 462. LDL-receptor class B repeat units follow at residues 435-477 (HRVF…DWIN), 478-520 (NKLY…DPTV), 521-567 (GYLF…DLVS), and 568-612 (KRVY…FEEH). Asparagine 657 carries an N-linked (GlcNAc...) asparagine glycan. 4 LDL-receptor class B repeats span residues 752–794 (STIF…DWIS), 795–836 (RNLY…HPAA), 837–880 (GYMF…DWST), and 881–924 (SRLY…FKDN). Asparagine 865 carries N-linked (GlcNAc...) asparagine glycosylation. One can recognise an LDL-receptor class A 8 domain in the interval 1024 to 1060 (QCGSSSFPCNNGKCVPSIFRCDGVDDCHDNSDEHQCG). 3 disulfides stabilise this stretch: cysteine 1025–cysteine 1037, cysteine 1032–cysteine 1050, and cysteine 1044–cysteine 1059. The N-linked (GlcNAc...) asparagine glycan is linked to asparagine 1063. 7 consecutive LDL-receptor class A domains span residues 1065-1102 (TCSS…QNCP), 1109-1145 (TCPP…KNCQ), 1149-1185 (TCHP…AGCV), 1187-1224 (NCTS…AGCP), 1230-1268 (MCHP…NGCV), 1271-1307 (TCSP…KDCP), and 1312-1350 (HCPS…PLCN). 9 disulfides stabilise this stretch: cysteine 1066-cysteine 1079, cysteine 1073-cysteine 1092, cysteine 1086-cysteine 1101, cysteine 1110-cysteine 1122, cysteine 1117-cysteine 1135, cysteine 1129-cysteine 1144, cysteine 1150-cysteine 1162, cysteine 1157-cysteine 1175, and cysteine 1169-cysteine 1184. Positions 1127, 1130, 1132, 1134, 1140, and 1141 each coordinate Ca(2+). N-linked (GlcNAc...) asparagine glycosylation occurs at asparagine 1187. 18 disulfides stabilise this stretch: cysteine 1188–cysteine 1201, cysteine 1195–cysteine 1214, cysteine 1208–cysteine 1223, cysteine 1231–cysteine 1244, cysteine 1238–cysteine 1257, cysteine 1251–cysteine 1267, cysteine 1272–cysteine 1284, cysteine 1279–cysteine 1297, cysteine 1291–cysteine 1306, cysteine 1313–cysteine 1326, cysteine 1320–cysteine 1339, cysteine 1333–cysteine 1349, cysteine 1354–cysteine 1365, cysteine 1361–cysteine 1374, cysteine 1376–cysteine 1389, cysteine 1395–cysteine 1405, cysteine 1401–cysteine 1414, and cysteine 1416–cysteine 1429. Positions 1206, 1209, 1211, 1213, 1219, and 1220 each coordinate Ca(2+). 2 N-linked (GlcNAc...) asparagine glycosylation sites follow: asparagine 1328 and asparagine 1341. Residues 1350-1390 (NQDSCLHFNGGCTHRCIQGPFGATCVCPIGYQLANDTKTCE) enclose the EGF-like 1 domain. N-linked (GlcNAc...) asparagine glycosylation occurs at asparagine 1384. An EGF-like 2; calcium-binding domain is found at 1391 to 1430 (DVNECDIPGFCSQHCVNMRGSFRCACDPEYTLESDGRTCK). 3 N-linked (GlcNAc...) asparagine glycosylation sites follow: asparagine 1451, asparagine 1497, and asparagine 1551. LDL-receptor class B repeat units lie at residues 1479-1521 (GRVF…DWIG), 1522-1564 (RNIY…DPRM), 1567-1610 (NVMF…DYPN), 1611-1655 (RLIY…FEDS), and 1656-1696 (VFWT…IHPS). 3 N-linked (GlcNAc...) asparagine glycosylation sites follow: asparagine 1676, asparagine 1733, and asparagine 1811. 10 LDL-receptor class B repeats span residues 1791–1833 (QFIY…DWVS), 1834–1883 (RNIY…DPAR), 1884–1931 (GKLY…DIQE), 1932–1973 (QKLY…HGSF), 1974–2014 (LYYS…YHHR), 2108–2157 (GFIY…DWVA), 2158–2202 (GNLY…DPKH), 2203–2246 (RYLF…DHDT), 2247–2290 (GYIY…FGES), and 2291–2333 (IIWV…FDEH). 4 N-linked (GlcNAc...) asparagine glycosylation sites follow: asparagine 2131, asparagine 2134, asparagine 2178, and asparagine 2225. N-linked (GlcNAc...) asparagine glycosylation occurs at asparagine 2396. LDL-receptor class B repeat units lie at residues 2432–2478 (NRIF…DWIN), 2479–2519 (RRIY…DPCR), 2520–2563 (GYMY…DLET), 2564–2605 (DLLY…YGQY), and 2606–2647 (IYWT…VVKT). 2 N-linked (GlcNAc...) asparagine glycosylation sites follow: asparagine 2488 and asparagine 2548. LDL-receptor class A domains lie at 2700 to 2738 (RCNQ…TVCA), 2741 to 2777 (TCRS…AGCL), 2780 to 2819 (SCNS…KNCP), 2822 to 2861 (TCQP…IYCA), 2864 to 2902 (TCRS…DTCG), 2907 to 2946 (SCSA…HHCE), 2949 to 2991 (NCSS…QNCT), 2994 to 3030 (ACST…RGCS), 3033 to 3071 (PCRD…HLCH), and 3076 to 3112 (TCPP…KGCG). Intrachain disulfides connect cysteine 2701–cysteine 2713, cysteine 2708–cysteine 2726, cysteine 2720–cysteine 2737, cysteine 2742–cysteine 2754, cysteine 2749–cysteine 2767, cysteine 2761–cysteine 2776, cysteine 2781–cysteine 2794, cysteine 2789–cysteine 2807, cysteine 2801–cysteine 2818, cysteine 2823–cysteine 2836, cysteine 2830–cysteine 2849, cysteine 2843–cysteine 2860, cysteine 2865–cysteine 2878, cysteine 2872–cysteine 2891, cysteine 2885–cysteine 2901, cysteine 2908–cysteine 2920, cysteine 2915–cysteine 2933, and cysteine 2927–cysteine 2945. Asparagine 2782 carries an N-linked (GlcNAc...) asparagine glycan. Residue asparagine 2810 is glycosylated (N-linked (GlcNAc...) asparagine). N-linked (GlcNAc...) asparagine glycosylation occurs at asparagine 2949. 18 disulfides stabilise this stretch: cysteine 2950–cysteine 2967, cysteine 2957–cysteine 2980, cysteine 2974–cysteine 2990, cysteine 2995–cysteine 3007, cysteine 3002–cysteine 3020, cysteine 3014–cysteine 3029, cysteine 3034–cysteine 3046, cysteine 3041–cysteine 3059, cysteine 3053–cysteine 3070, cysteine 3077–cysteine 3089, cysteine 3084–cysteine 3102, cysteine 3096–cysteine 3111, cysteine 3116–cysteine 3128, cysteine 3124–cysteine 3137, cysteine 3139–cysteine 3152, cysteine 3158–cysteine 3169, cysteine 3165–cysteine 3178, and cysteine 3180–cysteine 3193. N-linked (GlcNAc...) asparagine glycosylation is present at asparagine 2989. The EGF-like 3 domain occupies 3112 to 3153 (GINECQDSSISHCDHNCTDTITSFYCSCLPGYKLMSDKRTCV). N-linked (GlcNAc...) asparagine glycosylation is present at asparagine 3127. The 41-residue stretch at 3154-3194 (DIDECKETPQLCSQKCENVIGSYICKCAPGYIREPDGKSCR) folds into the EGF-like 4; calcium-binding domain. 4 N-linked (GlcNAc...) asparagine glycosylation sites follow: asparagine 3213, asparagine 3259, asparagine 3317, and asparagine 3357. LDL-receptor class B repeat units lie at residues 3241–3283 (ERLY…DWVS), 3284–3326 (RKLY…ENPR), 3335–3378 (GYVY…DYTN), 3379–3421 (DLLY…FEDT), and 3422–3462 (VFWT…LHPY). Asparagine 3448 carries N-linked (GlcNAc...) asparagine glycosylation. 8 consecutive LDL-receptor class A domains span residues 3513-3551 (MCSS…DLCP), 3554-3592 (FCRL…VLCE), 3595-3633 (RCEA…SHCA), 3636-3674 (TCRP…HECM), 3679-3717 (NCDN…QGCE), 3720-3757 (PCHP…ESCV), 3760-3796 (ECTE…RDCE), and 3799-3835 (TCHP…SACP). 24 disulfide bridges follow: cysteine 3514-cysteine 3527, cysteine 3521-cysteine 3540, cysteine 3534-cysteine 3550, cysteine 3555-cysteine 3567, cysteine 3562-cysteine 3580, cysteine 3574-cysteine 3591, cysteine 3596-cysteine 3608, cysteine 3603-cysteine 3621, cysteine 3615-cysteine 3632, cysteine 3637-cysteine 3649, cysteine 3644-cysteine 3662, cysteine 3656-cysteine 3673, cysteine 3680-cysteine 3694, cysteine 3688-cysteine 3707, cysteine 3701-cysteine 3716, cysteine 3721-cysteine 3734, cysteine 3729-cysteine 3747, cysteine 3741-cysteine 3756, cysteine 3761-cysteine 3773, cysteine 3768-cysteine 3786, cysteine 3780-cysteine 3795, cysteine 3800-cysteine 3812, cysteine 3807-cysteine 3825, and cysteine 3819-cysteine 3834. An N-linked (GlcNAc...) asparagine glycan is attached at asparagine 3566. A glycan (N-linked (GlcNAc...) asparagine) is linked at asparagine 3682. Asparagine 3840 carries N-linked (GlcNAc...) asparagine glycosylation. 3 consecutive LDL-receptor class A domains span residues 3843-3881 (YCPA…HLCF), 3884-3923 (PCES…EHCR), and 3929-3965 (PCTD…TGCN). Cystine bridges form between cysteine 3844/cysteine 3856, cysteine 3851/cysteine 3869, cysteine 3863/cysteine 3880, cysteine 3885/cysteine 3898, cysteine 3893/cysteine 3911, cysteine 3905/cysteine 3922, cysteine 3930/cysteine 3942, cysteine 3937/cysteine 3955, and cysteine 3949/cysteine 3964. Residues asparagine 3969 and asparagine 3980 are each glycosylated (N-linked (GlcNAc...) asparagine). The EGF-like 5; calcium-binding domain occupies 4009 to 4050 (DINECEEFGICPQSCRNSKGSYECFCVDGFKSMSTHYGERCA). 3 cysteine pairs are disulfide-bonded: cysteine 4013-cysteine 4023, cysteine 4019-cysteine 4032, and cysteine 4034-cysteine 4049. Asparagine 4070 carries N-linked (GlcNAc...) asparagine glycosylation. LDL-receptor class B repeat units lie at residues 4156–4198 (RHIY…NPKL), 4199–4242 (GLMF…DYLN), and 4244–4285 (DRIY…FEDQ). Asparagine 4329 carries an N-linked (GlcNAc...) asparagine glycan. The region spanning 4379-4413 (MPSPCRCMHGGSCYFDENDLPKCKCSSGYSGEYCE) is the EGF-like 6 domain. Intrachain disulfides connect cysteine 4383–cysteine 4391, cysteine 4385–cysteine 4401, and cysteine 4403–cysteine 4412. Residues 4426-4446 (MALLLTFAMVIIVGALVLVGF) form a helical membrane-spanning segment. Residues 4447-4660 (FHYRKTGSLL…ANLVKEDSDV (214 aa)) lie on the Cytoplasmic side of the membrane. The SH3-binding motif lies at 4454 to 4463 (SLLPSLPKLP). The short motif at 4457–4462 (PSLPKL) is the PxLPxI/L motif 1; mediates interaction with ANKRA2 element. Residues 4460–4465 (PKLPSL) carry the PxLPxI/L motif 2; mediates interaction with ANKRA2 motif. A phosphoserine mark is found at serine 4464 and serine 4467. The Endocytosis signal signature appears at 4522 to 4527 (FENPMY). The disordered stretch occupies residues 4558-4660 (QNYGRSIDPS…ANLVKEDSDV (103 aa)). Position 4577 is a phosphoserine (serine 4577). Residues 4597 to 4610 (QTTNFENPIYAEMD) are interaction with DAB2. The short motif at 4603–4606 (NPIY) is the NPXY motif element. Residues 4606 to 4609 (YAEM) carry the SH2-binding motif. Positions 4619-4630 (VAPPPSPSLPAK) match the SH3-binding motif. Serine 4624 is modified (phosphoserine). The span at 4627–4636 (LPAKASKRSS) shows a compositional bias: low complexity. A Phosphothreonine modification is found at threonine 4637. Serine 4658 is subject to Phosphoserine.

Belongs to the LDLR family. Binds plasminogen, extracellular matrix components, plasminogen activator-plasminogen activator inhibitor type I complex, apolipoprotein E-enriched beta-VLDL, lipoprotein lipase, lactoferrin, CLU/clusterin and calcium. Forms a multimeric complex together with LRPAP1. Interacts (via PxLPxI/L motif) with ANKRA2 (via ankyrin repeats). Interacts with LRP2BP. Interacts (via NPXY motif) with DAB2; the interaction is not affected by tyrosine phosphorylation of the NPXY motif. Interacts with MB. Interacts with BMP4. Interacts with the Sonic hedgehog protein N-product which is the active product of SHH. Interacts with CST3 in a calcium-dependent manner. Interacts with the vitamin-D binding protein GC/DBP. Interacts with sex hormone-binding protein SHBG. Interacts with angiotensin-2. Also interacts with angiotensin 1-7. Interacts with APOM. Interacts with selenoprotein SEPP1. Interacts with LEP. Interacts with ALB. Interacts with the antiapoptotic protein BIRC5/survivin. Interacts with matrix metalloproteinase MMP2 in complex with metalloproteinase inhibitor TIMP1. In neurons, forms a trimeric complex with APP and APPB1/FE65. Interacts with LDLRAP1/ARH; mediates trafficking of LRP2 to the endocytic recycling compartment. Does not interact with beta-amyloid protein 40 alone but interacts with the complex composed of beta-amyloid protein 40 and CLU/APOJ. Interacts with MDK. In terms of processing, a fraction undergoes proteolytic cleavage of the extracellular domain at the cell membrane to generate a cytoplasmic tail fragment. This is internalized into the early endosome from where it trafficks in an LDLRAP1/ARH-dependent manner to the endocytic recycling compartment (ERC). In the ERC, it is further cleaved by gamma-secretase to release a fragment which translocates to the nucleus and mediates transcriptional repression. N-glycosylation is required for ligand binding. Contains core-fucosylated N-glycans in kidney proximal convoluted tubules (PCTs) and hybrid-type N-glycans in proximal straight tubules (PSTs). Interacts with ligands in a glycoform-dependent manner. Retinol-binding protein and the vitamin D carrier GC/DBP are endocytosed primarily by PCTs, albumin is endocytosed equally by PCTs and PSTs, and the aminoglycoside kanamycin is endocytosed primarily by PSTs. In the inner ear, strongly expressed in the marginal cells of the stria vascularis (at protein level). In the female reproductive tract, expressed on the luminal side of the uterine epithelium (at protein level). In the adult brain, expressed in ependymal cells of the lateral ventricles where expression is restricted to the ependyma that faces the stem cell niche (at protein level). Expressed in neurons throughout the brain including in the hippocampus, limbic cortices and cerebellum (at protein level). In the developing optic nerve, expressed exclusively in astrocytes at 14.5 dpc, 16.5 dpc and 18.5 dpc (at protein level).

It is found in the apical cell membrane. Its subcellular location is the endosome lumen. The protein resides in the membrane. It localises to the coated pit. The protein localises to the cell projection. It is found in the dendrite. Its subcellular location is the axon. Functionally, multiligand endocytic receptor. Acts together with CUBN to mediate endocytosis of high-density lipoproteins. Mediates receptor-mediated uptake of polybasic drugs such as aprotinin, aminoglycosides and polymyxin B. In the kidney, mediates the tubular uptake and clearance of leptin. Also mediates transport of leptin across the blood-brain barrier through endocytosis at the choroid plexus epithelium. Endocytosis of leptin in neuronal cells is required for hypothalamic leptin signaling and leptin-mediated regulation of feeding and body weight. Mediates endocytosis and subsequent lysosomal degradation of CST3 in kidney proximal tubule cells. Mediates renal uptake of 25-hydroxyvitamin D3 in complex with the vitamin D3 transporter GC/DBP. Mediates renal uptake of metallothionein-bound heavy metals. Together with CUBN, mediates renal reabsorption of myoglobin. Mediates renal uptake and subsequent lysosomal degradation of APOM. Plays a role in kidney selenium homeostasis by mediating renal endocytosis of selenoprotein SEPP1. Mediates renal uptake of the antiapoptotic protein BIRC5/survivin which may be important for functional integrity of the kidney. Mediates renal uptake of matrix metalloproteinase MMP2 in complex with metalloproteinase inhibitor TIMP1. Mediates endocytosis of Sonic hedgehog protein N-product (ShhN), the active product of SHH. Also mediates ShhN transcytosis. In the embryonic neuroepithelium, mediates endocytic uptake and degradation of BMP4, is required for correct SHH localization in the ventral neural tube and plays a role in patterning of the ventral telencephalon. Required at the onset of neurulation to sequester SHH on the apical surface of neuroepithelial cells of the rostral diencephalon ventral midline and to control PTCH1-dependent uptake and intracellular trafficking of SHH. During neurulation, required in neuroepithelial cells for uptake of folate bound to the folate receptor FOLR1 which is necessary for neural tube closure. In the adult brain, negatively regulates BMP signaling in the subependymal zone which enables neurogenesis to proceed. In astrocytes, mediates endocytosis of ALB which is required for the synthesis of the neurotrophic factor oleic acid. Involved in neurite branching. During optic nerve development, required for SHH-mediated migration and proliferation of oligodendrocyte precursor cells. Mediates endocytic uptake and clearance of SHH in the retinal margin which protects retinal progenitor cells from mitogenic stimuli and keeps them quiescent. Plays a role in reproductive organ development by mediating uptake in reproductive tissues of androgen and estrogen bound to the sex hormone binding protein SHBG. Mediates endocytosis of angiotensin-2. Also mediates endocytosis of angiotensin 1-7. Binds to the complex composed of beta-amyloid protein 40 and CLU/APOJ and mediates its endocytosis and lysosomal degradation. Required for embryonic heart development. Required for normal hearing, possibly through interaction with estrogen in the inner ear. In Mus musculus (Mouse), this protein is Low-density lipoprotein receptor-related protein 2 (Lrp2).